Reading from the N-terminus, the 282-residue chain is Secretory carrier-associated membrane protein 3 (282 aa).

The segment at 1–36 (MAGKHGRNGFEDDDVNPFAGGSVPPANNSRLPPLSH) is disordered. Topologically, residues 1–117 (MAGKHGRNGF…EIPIHLQRMQ (117 aa)) are cytoplasmic. The stretch at 48–92 (LDSSKDLKKKEKELQAMEAELNKRERELKRKEEAAAQAGIVIEDK) forms a coiled coil. 4 helical membrane-spanning segments follow: residues 118–138 (YLAFSSFLGLAACLFWNIIAT), 148–168 (VIIWLLAIIYFISGVPGAYVL), 185–205 (FGWFFLFYLIHIIFCVWAAVA), and 230–250 (IVGIFYFVGFGLFCLESLLSI). Residues 251-282 (GVIQQVYMYFRGSGKAAEMKREAARGALSSAF) are Cytoplasmic-facing.

The protein belongs to the SCAMP family.

It is found in the cell membrane. Its subcellular location is the cytoplasmic vesicle. The protein localises to the secretory vesicle membrane. Probably involved in membrane trafficking. This is Secretory carrier-associated membrane protein 3 (SCAMP3) from Oryza sativa subsp. japonica (Rice).